The chain runs to 396 residues: Obg-like ATPase 1 (396 aa).

Positions 23 to 283 constitute an OBG-type G domain; that stretch reads LKIGIVGLPN…MSAEEKQKYL (261 aa). An ATP-binding site is contributed by 32–37; the sequence is NVGKST. Residues S36 and T56 each contribute to the Mg(2+) site. Position 231 (L231) interacts with ATP. Positions 267 to 274 match the Nuclear export signal motif; it reads LELKLQDM. A TGS domain is found at 304–387; the sequence is QLEYFFTAGP…EDGDIIFFKF (84 aa).

It belongs to the TRAFAC class OBG-HflX-like GTPase superfamily. OBG GTPase family. YchF/OLA1 subfamily. As to quaternary structure, monomer. It depends on Mg(2+) as a cofactor.

It localises to the cytoplasm. It is found in the nucleus. The protein localises to the nucleolus. In terms of biological role, hydrolyzes ATP, and can also hydrolyze GTP with lower efficiency. Has lower affinity for GTP. This chain is Obg-like ATPase 1, found in Gallus gallus (Chicken).